The sequence spans 160 residues: Cytochrome b6-f complex subunit 4 (160 aa).

The next 3 membrane-spanning stretches (helical) occupy residues 36 to 56 (LLYI…GLSV), 95 to 115 (LLGV…PFIE), and 131 to 151 (TLFL…TLPI).

This sequence belongs to the cytochrome b family. PetD subfamily. In terms of assembly, the 4 large subunits of the cytochrome b6-f complex are cytochrome b6, subunit IV (17 kDa polypeptide, petD), cytochrome f and the Rieske protein, while the 4 small subunits are petG, petL, petM and petN. The complex functions as a dimer.

It is found in the plastid. Its subcellular location is the chloroplast thylakoid membrane. Component of the cytochrome b6-f complex, which mediates electron transfer between photosystem II (PSII) and photosystem I (PSI), cyclic electron flow around PSI, and state transitions. This Tetradesmus obliquus (Green alga) protein is Cytochrome b6-f complex subunit 4.